The following is a 352-amino-acid chain: Phosphate acyltransferase (352 aa).

Belongs to the PlsX family. Homodimer. Probably interacts with PlsY.

The protein resides in the cytoplasm. It carries out the reaction a fatty acyl-[ACP] + phosphate = an acyl phosphate + holo-[ACP]. The protein operates within lipid metabolism; phospholipid metabolism. Its function is as follows. Catalyzes the reversible formation of acyl-phosphate (acyl-PO(4)) from acyl-[acyl-carrier-protein] (acyl-ACP). This enzyme utilizes acyl-ACP as fatty acyl donor, but not acyl-CoA. This Bordetella bronchiseptica (strain ATCC BAA-588 / NCTC 13252 / RB50) (Alcaligenes bronchisepticus) protein is Phosphate acyltransferase.